Here is a 319-residue protein sequence, read N- to C-terminus: MSPNGSDRSPRRPMRRKLLQALTAGLVLATATGCTYKDFPRLGMPTPVTEEAPRILSLWQGSWAAALATGVLVWGLILWATIFHRRSRTKVEVPPQTRYNMPIEALYTVVPLIIVSVLFYFTARDESKLLDLSKKPDVTVNVVGFQWSWGFNYIENVDGSTGNAKTDKNLAAIPDRFKEAFPANAGGVYDVGTPGTRNPQTNNPGPTLWLPKGKTVRFVLTSRDVIHSFWVVPFLMKQDVIPGHTNSFQVTPNREGTFLGKCAELCGVDHSRMLFNVKVVSPERYQQHLKDLAKKGQTGYVPAGIAQTSHEKNRETNNL.

The signal sequence occupies residues 1-33 (MSPNGSDRSPRRPMRRKLLQALTAGLVLATATG). Transmembrane regions (helical) follow at residues 63–83 (WAAALATGVLVWGLILWATIF) and 101–121 (MPIEALYTVVPLIIVSVLFYF). Cu cation-binding residues include His227, Cys262, Cys266, and His270.

This sequence belongs to the cytochrome c oxidase subunit 2 family. Cu cation serves as cofactor. It depends on heme as a cofactor.

It is found in the cell membrane. The catalysed reaction is 4 Fe(II)-[cytochrome c] + O2 + 8 H(+)(in) = 4 Fe(III)-[cytochrome c] + 2 H2O + 4 H(+)(out). Its function is as follows. Subunits I and II form the functional core of the enzyme complex. Electrons originating in cytochrome c are transferred via heme a and Cu(A) to the binuclear center formed by heme a3 and Cu(B). This chain is Probable cytochrome c oxidase subunit 2 (ctaC), found in Streptomyces avermitilis (strain ATCC 31267 / DSM 46492 / JCM 5070 / NBRC 14893 / NCIMB 12804 / NRRL 8165 / MA-4680).